Here is a 391-residue protein sequence, read N- to C-terminus: cAMP-dependent protein kinase regulatory subunit (391 aa).

The disordered stretch occupies residues 1–84; that stretch reads MFKSPFGANA…PPNPESYPAQ (84 aa). The tract at residues 1-131 is dimerization and phosphorylation; the sequence is MFKSPFGANA…RLKTAIAGNF (131 aa). The span at 38 to 55 shows a compositional bias: polar residues; sequence TVTSPTSPNFGMNAQSMF. Serine 92 is subject to Phosphoserine. 3',5'-cyclic AMP is bound by residues 132 to 261, glutamate 210, arginine 219, 264 to 381, glutamate 331, and arginine 340; these read LFSH…FLRE and LLQT…DIKT.

The protein belongs to the cAMP-dependent kinase regulatory chain family. Tetramer, composed of 2 regulatory (R) and 2 catalytic (C) subunits. In the presence of cAMP it dissociates into 2 active monomeric C subunits and an R dimer.

The polypeptide is cAMP-dependent protein kinase regulatory subunit (PKAR) (Colletotrichum orbiculare (strain 104-T / ATCC 96160 / CBS 514.97 / LARS 414 / MAFF 240422) (Cucumber anthracnose fungus)).